Reading from the N-terminus, the 717-residue chain is ATP-dependent zinc metalloprotease FtsH (717 aa).

At 1-9 the chain is on the cytoplasmic side; the sequence is MKNASRIFK. Residues 10–30 form a helical membrane-spanning segment; the sequence is GPLIWILLCIGLIIVFLQFAG. The Extracellular portion of the chain corresponds to 31–111; that stretch reads SGNGYKDIPT…SWQGENPGQS (81 aa). A helical transmembrane segment spans residues 112 to 132; the sequence is IWKALLINFLPFVIILLFFLW. Topologically, residues 133–717 are cytoplasmic; the sequence is AMNAAQGMGG…NGNPWGPPRS (585 aa). 207–214 lines the ATP pocket; that stretch reads GPPGTGKT. His429 provides a ligand contact to Zn(2+). The active site involves Glu430. Residues His433 and Asp505 each contribute to the Zn(2+) site. The disordered stretch occupies residues 617 to 717; it reads AFTGSDKRVP…NGNPWGPPRS (101 aa). A compositionally biased stretch (pro residues) spans 691-717; that stretch reads PEPPSPTHPGEGPQPPSNGNPWGPPRS.

In the central section; belongs to the AAA ATPase family. It in the C-terminal section; belongs to the peptidase M41 family. Homohexamer. Zn(2+) serves as cofactor.

The protein localises to the cell membrane. Its function is as follows. Acts as a processive, ATP-dependent zinc metallopeptidase for both cytoplasmic and membrane proteins. Plays a role in the quality control of integral membrane proteins. This is ATP-dependent zinc metalloprotease FtsH from Cutibacterium acnes (strain SK137) (Propionibacterium acnes).